The following is a 125-amino-acid chain: Small ribosomal subunit protein eS8 (125 aa).

Positions 1–36 (MKDQGRSTRKRTGGRLHDVSKKKRHQLGREPAETTV) are disordered. Over residues 7–26 (STRKRTGGRLHDVSKKKRHQ) the composition is skewed to basic residues. A compositionally biased stretch (basic and acidic residues) spans 27 to 36 (LGREPAETTV).

This sequence belongs to the eukaryotic ribosomal protein eS8 family. In terms of assembly, part of the 30S ribosomal subunit.

The sequence is that of Small ribosomal subunit protein eS8 from Haloquadratum walsbyi (strain DSM 16790 / HBSQ001).